The chain runs to 359 residues: MDKIFEQLDGLLDRYEELQELMSDPEVISDTKRYLALSKEEGGMRDVVAAYKKYKQVLSDIKESEEVLRESKDDDMEALAKEDLEDLQKQKADLEDQIKVLMLPKDPNDDKNIIMEIRGAAGGDEASLFAGDLLNMYMHYAERQGWKTEIIDATPTEVGGYKEVVVMITGDNVYSKLKYENGAHRVQRVPVTESAGRVHTSTATVGVMPEYDEVDLKIDPKDIRTDVYRSSGAGGQHVNKTSSAVRMTHIPSGIVVSMQDERSQQENRARAMQILRSRVYDYYETQNQEKYDQNRKNAIGTGDRSERIRTYNYPQNRVTDHRIGLTLNKLDRIMNGELDEIIDALIVHDQAQKMESLNV.

Glutamine 236 carries the N5-methylglutamine modification.

This sequence belongs to the prokaryotic/mitochondrial release factor family. In terms of processing, methylated by PrmC. Methylation increases the termination efficiency of RF1.

It is found in the cytoplasm. Functionally, peptide chain release factor 1 directs the termination of translation in response to the peptide chain termination codons UAG and UAA. The polypeptide is Peptide chain release factor 1 (Lacticaseibacillus casei (strain BL23) (Lactobacillus casei)).